A 320-amino-acid polypeptide reads, in one-letter code: Serpentine receptor class gamma-15 (320 aa).

A run of 7 helical transmembrane segments spans residues 29–49 (TISYLIPGGILHLFILHTILV), 57–77 (GSSFFAIFALDSVSSIIIVFI), 85–105 (FLYVPPLCPIVGPFFWASSLI), 151–171 (VSLVIICILPLGGTWNIIISP), 197–217 (LFQSIYILTALVFTFICTSVT), 240–260 (IYISLTFLAAAASQALYAFCT), and 268–288 (LFTAQFLAFDMFTVGSAVILF).

The protein belongs to the nematode receptor-like protein srg family.

The protein localises to the membrane. The protein is Serpentine receptor class gamma-15 (srg-15) of Caenorhabditis elegans.